The primary structure comprises 237 residues: Lectin ConGF (237 aa).

Mn(2+) contacts are provided by Glu-8 and Asp-10. Ca(2+) is bound by residues Asp-10, Tyr-12, Asn-14, and Asp-19. Asn-14 lines the a carbohydrate pocket. Mn(2+) contacts are provided by Asp-19 and His-24. Residues Leu-99, Tyr-100, Asp-208, and Arg-228 each contribute to the a carbohydrate site.

Belongs to the leguminous lectin family. In terms of assembly, homotetramer; dimer of dimers. Post-translationally, concanavalin A-like lectins of the Diocleinae subtribe undergo proteolytic processing referred to as circular permutation. The propeptide is split into an N-terminal and a C-terminal part, the gamma and beta chain, respectively. These are then religated in beta-gamma order to form the mature alpha chain. The beta and gamma chains can often be detected in cell extracts. Residues 1-118 of the mature chain, as displayed here, probably constitute the beta chain in the propeptide, residues 119-237 the gamma chain.

Lectin. Induces paw edema in mice. Has a weak vasorelaxant effect on rat aorta. Has anti-inflammatory and anti-nociceptive effects. This is Lectin ConGF from Canavalia grandiflora (Jackbean).